The following is a 153-amino-acid chain: Ribosome maturation factor RimP (153 aa).

Belongs to the RimP family.

The protein localises to the cytoplasm. Its function is as follows. Required for maturation of 30S ribosomal subunits. This chain is Ribosome maturation factor RimP, found in Rippkaea orientalis (strain PCC 8801 / RF-1) (Cyanothece sp. (strain PCC 8801)).